A 785-amino-acid polypeptide reads, in one-letter code: Semaphorin-3E (785 aa).

Residues 1–25 (MLGRMASAQDLLILALCGLLLELPA) form the signal peptide. In terms of domain architecture, Sema spans 36 to 520 (RLRLSHKELW…TESVIAQVKF (485 aa)). N-linked (GlcNAc...) asparagine glycosylation occurs at Asn48. Cys109 and Cys119 are joined by a disulfide. Asn130 carries N-linked (GlcNAc...) asparagine glycosylation. Disulfide bonds link Cys137–Cys146, Cys274–Cys386, Cys298–Cys346, and Cys523–Cys541. A glycan (N-linked (GlcNAc...) asparagine) is linked at Asn600. The Ig-like C2-type domain maps to 651 to 740 (LDAGTYFCQT…EYCEKVWCTD (90 aa)). Cys658 and Cys733 are disulfide-bonded. The tract at residues 744–785 (KKLKMSPSKWKYANPQEKRQDQEKKARIRPEHYRLPRNIADS) is disordered. Over residues 759 to 777 (QEKRQDQEKKARIRPEHYR) the composition is skewed to basic and acidic residues.

The protein belongs to the semaphorin family. Collapsin-1, -2, -3, and -5 bind to overlapping but distinct axon tracts.

It is found in the secreted. Its function is as follows. Plays an important role in signaling via the cell surface receptor PLXND1. Mediates reorganization of the actin cytoskeleton, leading to the retraction of cell projections. Promotes focal adhesion disassembly and inhibits adhesion of endothelial cells to the extracellular matrix. Regulates angiogenesis. Can down-regulate sprouting angiogenesis. Required for normal vascular patterning during embryogenesis. Induces the collapse and paralysis of neuronal growth cones. Plays an important role in ensuring the specificity of synapse formation. The chain is Semaphorin-3E (SEMA3E) from Gallus gallus (Chicken).